The following is a 418-amino-acid chain: Glutamyl-tRNA reductase (418 aa).

Substrate contacts are provided by residues 49–52, Ser109, 114–116, and Gln120; these read TCNR and EPQ. Cys50 acts as the Nucleophile in catalysis. Residue 189–194 coordinates NADP(+); sequence GAGETI.

This sequence belongs to the glutamyl-tRNA reductase family. Homodimer.

The catalysed reaction is (S)-4-amino-5-oxopentanoate + tRNA(Glu) + NADP(+) = L-glutamyl-tRNA(Glu) + NADPH + H(+). It functions in the pathway porphyrin-containing compound metabolism; protoporphyrin-IX biosynthesis; 5-aminolevulinate from L-glutamyl-tRNA(Glu): step 1/2. Functionally, catalyzes the NADPH-dependent reduction of glutamyl-tRNA(Glu) to glutamate 1-semialdehyde (GSA). The chain is Glutamyl-tRNA reductase from Escherichia coli O7:K1 (strain IAI39 / ExPEC).